A 348-amino-acid polypeptide reads, in one-letter code: LIM domain-containing protein unc-97 (348 aa).

5 consecutive LIM zinc-binding domains span residues 21–73 (CVRC…CEHD), 82–132 (CGKC…CREC), 146–196 (CHKC…CLRC), 205–255 (CGAC…CEQH), and 264–315 (CFKC…CKRC).

Interacts with unc-98. Component of an integrin containing attachment complex, composed of at least pat-2, pat-3, pat-4, pat-6, unc-52, unc-97 and unc-112. As to expression, restricted to tissue types that attach to the hypodermis, specifically body wall muscles, vulval muscles, and mechanosensory neurons.

The protein localises to the cell junction. It localises to the adherens junction. It is found in the nucleus. Its function is as follows. Component of an integrin containing attachment complex, which is required for muscle development and maintenance. Probably function in adherens junction. Affects the structural integrity of the integrin containing muscle adherens junctions and contributes to the mechanosensory functions of touch neurons. The chain is LIM domain-containing protein unc-97 from Caenorhabditis elegans.